The chain runs to 184 residues: Dual-action ribosomal maturation protein DarP (184 aa).

A disordered region spans residues 1–27 (MSIPDTEIPVDDDGYDENGYDRPSKSQ). Positions 8-18 (IPVDDDGYDEN) are enriched in acidic residues.

Belongs to the DarP family.

It localises to the cytoplasm. Its function is as follows. Member of a network of 50S ribosomal subunit biogenesis factors which assembles along the 30S-50S interface, preventing incorrect 23S rRNA structures from forming. Promotes peptidyl transferase center (PTC) maturation. The polypeptide is Dual-action ribosomal maturation protein DarP (Bordetella avium (strain 197N)).